The chain runs to 313 residues: Monoglyceride lipase (313 aa).

A GXSXG motif is present at residues 121–125; sequence GHSMG. Ser-123 serves as the catalytic Nucleophile. Active-site charge relay system residues include Asp-251 and His-281.

This sequence belongs to the AB hydrolase superfamily. Monoacylglycerol lipase family.

It is found in the lipid droplet. It localises to the cytoplasm. Its subcellular location is the endoplasmic reticulum. The protein resides in the mitochondrion outer membrane. The enzyme catalyses Hydrolyzes glycerol monoesters of long-chain fatty acids.. It catalyses the reaction a fatty acid ethyl ester + H2O = ethanol + a fatty acid + H(+). It carries out the reaction 1-(9Z-octadecenoyl)-glycerol + H2O = glycerol + (9Z)-octadecenoate + H(+). The catalysed reaction is 2-(9Z-octadecenoyl)-glycerol + H2O = glycerol + (9Z)-octadecenoate + H(+). The enzyme catalyses 1-hexadecanoylglycerol + H2O = glycerol + hexadecanoate + H(+). It catalyses the reaction 2-hexadecanoylglycerol + H2O = glycerol + hexadecanoate + H(+). It carries out the reaction ethyl hexadecanoate + H2O = ethanol + hexadecanoate + H(+). The catalysed reaction is ethyl (9Z)-octadecenoate + H2O = ethanol + (9Z)-octadecenoate + H(+). The enzyme catalyses ethyl (9Z)-hexadecenoate + H2O = (9Z)-hexadecenoate + ethanol + H(+). It catalyses the reaction ethyl octadecanoate + H2O = ethanol + octadecanoate + H(+). It participates in glycerolipid metabolism; triacylglycerol degradation. Functionally, converts monoacylglycerides (MAG) to free fatty acids and glycerol. Has a strong preference for monounsaturated monoglycerides. Required for efficient degradation of MAG, short-lived intermediates of glycerolipid metabolism which may also function as lipid signaling molecules. Controls inactivation of the signaling lipid N-palmitoylethanolamine (PEA). Involved in fatty acid ethyl ester (FAEE) catabolism. FAEEs are non-oxidative metabolites of ethanol that are transiently incorporated into lipid droplets (LDs). Their mobilization by LD-resident FAEE hydrolases facilitates a controlled metabolism of these potentially toxic lipid metabolites. The polypeptide is Monoglyceride lipase (YJU3) (Saccharomyces cerevisiae (strain ATCC 204508 / S288c) (Baker's yeast)).